We begin with the raw amino-acid sequence, 229 residues long: Putative N-acetylmannosamine-6-phosphate 2-epimerase 2 (229 aa).

Belongs to the NanE family.

It catalyses the reaction an N-acyl-D-glucosamine 6-phosphate = an N-acyl-D-mannosamine 6-phosphate. Its pathway is amino-sugar metabolism; N-acetylneuraminate degradation; D-fructose 6-phosphate from N-acetylneuraminate: step 3/5. Its function is as follows. Converts N-acetylmannosamine-6-phosphate (ManNAc-6-P) to N-acetylglucosamine-6-phosphate (GlcNAc-6-P). This chain is Putative N-acetylmannosamine-6-phosphate 2-epimerase 2 (nanE2), found in Salmonella typhimurium (strain LT2 / SGSC1412 / ATCC 700720).